The chain runs to 978 residues: Sensor histidine kinase TodS (978 aa).

Positions 32-103 constitute a PAS 1 domain; that stretch reads CEEHARIIFD…TQKRLVETAS (72 aa). The PAC 1 domain maps to 108–162; sequence VRCDVEILGKSGGREVIAVDFSLLPICNEEGSIVYLLAEGRNITDKKKAEAMLAL. Residues 187 to 405 form the Histidine kinase 1 domain; the sequence is KVSHELRTPL…LFQVKLPLNA (219 aa). His-190 carries the phosphohistidine; by autocatalysis modification. The region spanning 452-567 is the Response regulatory domain; it reads RVLIVEDNPD…ELRARVSNLV (116 aa). At Asp-500 the chain carries 4-aspartylphosphate. The region spanning 611–681 is the PAS 2 domain; it reads SEARWKAVYE…QRLANLLQGG (71 aa). One can recognise a PAC 2 domain in the interval 685–737; it reads YSVERSYLCKNGSTIWANASVSLMPQRVGESPVILQIIDDITEKKQAQENLNQ. In terms of domain architecture, Histidine kinase 2 spans 757–974; that stretch reads YIAHEINQPL…CFLVSIPARQ (218 aa). Phosphohistidine is present on His-760.

Autophosphorylated. Activation requires a sequential transfer of a phosphate group from a His in the primary transmitter domain, to an Asp in the receiver domain and to a His in the secondary transmitter domain.

It is found in the cytoplasm. The enzyme catalyses ATP + protein L-histidine = ADP + protein N-phospho-L-histidine.. Its activity is regulated as follows. Activity is regulated by agonists and antagonists. Binding of agonists such as toluene or benzene to TodS stimulates autophosphorylation at His-190. Activity is inhibited by antagonists such as o-xylene, o-chlorotoluene and trimethylbenzene isomers, which bind to TodS but do not stimulate autophosphorylation. Agonists and antagonists bind to the same PAS domain. Its function is as follows. Member of the two-component regulatory system TodS/TodT involved in the regulation of toluene degradation. Phosphorylates TodT via a four-step phosphorelay in response to toluene. Can also be induced by benzene and ethylbenzene. This chain is Sensor histidine kinase TodS (todS), found in Pseudomonas putida (strain DOT-T1E).